A 320-amino-acid polypeptide reads, in one-letter code: cUMP-AMP-activated phospholipase (320 aa).

The 182-residue stretch at 23–204 folds into the PNPLA domain; sequence LALDGGGAKG…CANNPTLFAI (182 aa). The short motif at 27–32 is the GXGXXG element; that stretch reads GGGAKG. A GXSXG motif is present at residues 59–63; it reads GTSTG. The active-site Nucleophile is Ser61. Catalysis depends on Asp191, which acts as the Proton acceptor. A DGA/G motif is present at residues 191–193; it reads DGG.

It belongs to the patatin family.

The catalysed reaction is a 1,2-diacyl-sn-glycero-3-phosphocholine + H2O = a 2-acyl-sn-glycero-3-phosphocholine + a fatty acid + H(+). Phospholipase activity is specifically activated upon 3',3'-cUAMP binding. Is not activated by the other cyclic dinucleotides 3',3'-cGAMP, 3',3'-c-diAMP and 3',3'-c-diGMP. Therefore, is specifically activated by only the nucleotide synthesized from its adjacently encoded nucleotidyltransferase (CdnE). Its function is as follows. Effector phospholipase of a CBASS antivirus system. CBASS (cyclic oligonucleotide-based antiphage signaling system) provides immunity against bacteriophage. The CD-NTase protein synthesizes cyclic nucleotides in response to infection; these serve as specific second messenger signals. The signals activate a diverse range of effectors, leading to bacterial cell death and thus abortive phage infection. A type II-A(UA) CBASS system. Phospholipase that is activated upon binding to the cyclic dinucleotide (CDN) second messenger 3',3'-cyclic UMP-AMP (3',3'-cUAMP). The chain is cUMP-AMP-activated phospholipase from Escherichia coli.